A 508-amino-acid chain; its full sequence is MTSLMPGAGLLPIPTPNPLTTLGVSLSSLGAIPAAALDPNIATLGEIPQPPLMGNVDPSKIDEIRRTVYVGNLNSQTTTADQLLEFFKQVGEVKFVRMAGDETQPTRFAFVEFADQNSVPRALAFNGVMFGDRPLKINHSNNAIVKPPEMTPQAAAKELEEVMKRVREAQSFISAAIEPESGKSNERKGGRSRSHTRSKSRSSSKSHSRRKRSQSKHRSRSHNRSRSRQKDRRRSKSPHKKRSKSRERRKSRSRSHSRDKRKDTREKIKEKERVKEKDREKEREREKEREKEKERGKNKDRDKEREKDREKDKEKDREREREKEHEKDRDKEKEKEQDKEKEREKDRSKEIDEKRKKDKKSRTPPRSYNASRRSRSSSRERRRRRSRSSSRSPRTSKTIKRKSSRSPSPRSRNKKDKKREKERDHISERRERERSTSMRKSSNDRDGKEKLEKNSTSLKEKEHNKEPDSSVSKEVDDKDAPRTEENKIQHNGNCQLNEENLSTKTEAV.

One can recognise an RRM domain in the interval 66–142 (RTVYVGNLNS…RPLKINHSNN (77 aa)). Serine 171 and serine 184 each carry phosphoserine. A disordered region spans residues 173-508 (ISAAIEPESG…ENLSTKTEAV (336 aa)). Positions 180–189 (ESGKSNERKG) are enriched in basic and acidic residues. Residues 190-259 (GRSRSHTRSK…KSRSRSHSRD (70 aa)) show a composition bias toward basic residues. A compositionally biased stretch (basic and acidic residues) spans 260 to 355 (KRKDTREKIK…DRSKEIDEKR (96 aa)). Threonine 363 is subject to Phosphothreonine. Basic residues predominate over residues 372–388 (RRSRSSSRERRRRRSRS). Over residues 419–488 (REKERDHISE…DAPRTEENKI (70 aa)) the composition is skewed to basic and acidic residues. A compositionally biased stretch (polar residues) spans 489 to 508 (QHNGNCQLNEENLSTKTEAV). A Glycyl lysine isopeptide (Lys-Gly) (interchain with G-Cter in SUMO2) cross-link involves residue lysine 504.

The protein belongs to the splicing factor SR family. In terms of assembly, homodimer. Binds SFRS1, SFRS2, SFRS3 and SFRS6. Interacts with the spliceosome. Interacts with SREK1IP1.

The protein resides in the nucleus. Functionally, participates in the regulation of alternative splicing by modulating the activity of other splice facors. Inhibits the splicing activity of SFRS1, SFRS2 and SFRS6. Augments the splicing activity of SFRS3. This is Splicing regulatory glutamine/lysine-rich protein 1 (SREK1) from Homo sapiens (Human).